Reading from the N-terminus, the 498-residue chain is Succinate-semialdehyde dehydrogenase [NADP(+)] 1 (498 aa).

247 to 252 (GSTNVG) contacts NAD(+). Residues Glu-269 and Cys-303 contribute to the active site.

Belongs to the aldehyde dehydrogenase family. As to quaternary structure, homotetramer.

The protein localises to the cytoplasm. It carries out the reaction succinate semialdehyde + NAD(+) + H2O = succinate + NADH + 2 H(+). It catalyses the reaction succinate semialdehyde + NADP(+) + H2O = succinate + NADPH + 2 H(+). It functions in the pathway amino-acid degradation; 4-aminobutanoate degradation. Catalyzes the oxidation of succinate semialdehyde to succinate. Can utilize both NAD(+) or NADP(+) as a coenzyme. Functions in a gamma-aminobutyrate (GABA) degradation pathway that allows growth utilizing GABA as a nitrogen source. Functions in the GABA shunt, which allows to bypass 2 reactions in the TCA cycle by removing alpha-ketoglutarate from the cycle and feeding succinate and NADH back into the cycle. This Schizosaccharomyces pombe (strain 972 / ATCC 24843) (Fission yeast) protein is Succinate-semialdehyde dehydrogenase [NADP(+)] 1 (ssd1).